Reading from the N-terminus, the 372-residue chain is UDP-N-acetylglucosamine--N-acetylmuramyl-(pentapeptide) pyrophosphoryl-undecaprenol N-acetylglucosamine transferase (372 aa).

Residues 16–18 (TGG), Asn128, Arg164, Ser192, Ile250, and Gln295 contribute to the UDP-N-acetyl-alpha-D-glucosamine site.

Belongs to the glycosyltransferase 28 family. MurG subfamily.

The protein localises to the cell inner membrane. The enzyme catalyses di-trans,octa-cis-undecaprenyl diphospho-N-acetyl-alpha-D-muramoyl-L-alanyl-D-glutamyl-meso-2,6-diaminopimeloyl-D-alanyl-D-alanine + UDP-N-acetyl-alpha-D-glucosamine = di-trans,octa-cis-undecaprenyl diphospho-[N-acetyl-alpha-D-glucosaminyl-(1-&gt;4)]-N-acetyl-alpha-D-muramoyl-L-alanyl-D-glutamyl-meso-2,6-diaminopimeloyl-D-alanyl-D-alanine + UDP + H(+). Its pathway is cell wall biogenesis; peptidoglycan biosynthesis. Functionally, cell wall formation. Catalyzes the transfer of a GlcNAc subunit on undecaprenyl-pyrophosphoryl-MurNAc-pentapeptide (lipid intermediate I) to form undecaprenyl-pyrophosphoryl-MurNAc-(pentapeptide)GlcNAc (lipid intermediate II). The sequence is that of UDP-N-acetylglucosamine--N-acetylmuramyl-(pentapeptide) pyrophosphoryl-undecaprenol N-acetylglucosamine transferase from Paraburkholderia phytofirmans (strain DSM 17436 / LMG 22146 / PsJN) (Burkholderia phytofirmans).